The primary structure comprises 143 residues: Large ribosomal subunit protein uL15 (143 aa).

The interval 1–51 (MRLNSIAPAPGSRPSAKRVGRGIGSGLGKTAGRGHKGQKARAGGYHKVGFE) is disordered. The segment covering 21–31 (RGIGSGLGKTA) has biased composition (gly residues).

The protein belongs to the universal ribosomal protein uL15 family. In terms of assembly, part of the 50S ribosomal subunit.

In terms of biological role, binds to the 23S rRNA. The sequence is that of Large ribosomal subunit protein uL15 from Thioalkalivibrio sulfidiphilus (strain HL-EbGR7).